A 398-amino-acid polypeptide reads, in one-letter code: Phospholipase C (398 aa).

An N-terminal signal peptide occupies residues 1 to 28 (MKRKICKALICATLATSLWAGASTKVYA). Positions 29, 39, 84, 96, 154, 158, 164, 176, and 180 each coordinate Zn(2+). In terms of domain architecture, Zn-dependent PLC spans 29-278 (WDGKIDGTGT…HDVSEGNDPS (250 aa)). The segment at 275–283 (NDPSVGKNV) is linker. Residues 284 to 398 (KELVAYISTS…ISGNSTYNIK (115 aa)) enclose the PLAT domain. Ca(2+) contacts are provided by Asp297, Gly299, Thr300, Asp301, Asp321, Asn322, Gly324, Asn325, Asp326, Asp364, and Ala365.

This sequence belongs to the bacterial zinc-metallophospholipase C family. Requires Ca(2+) as cofactor. The cofactor is Zn(2+).

The protein localises to the secreted. It catalyses the reaction a 1,2-diacyl-sn-glycero-3-phosphocholine + H2O = phosphocholine + a 1,2-diacyl-sn-glycerol + H(+). In terms of biological role, bacterial hemolysins are exotoxins that attack blood cell membranes and cause cell rupture. Constitutes an essential virulence factor in gas gangrene. Binds to eukaryotic membranes where it hydrolyzes both phosphatidylcholine and sphingomyelin. The diacylglycerol produced can activate both the arachidonic acid pathway, leading to modulation of the inflammatory response cascade and thrombosis, and protein kinase C, leading to activation of eukaryotic phospholipases and further membrane damage. Acts on human and mouse erythrocytes, but not on rabbit or horse erythrocytes. In Clostridium perfringens (strain 13 / Type A), this protein is Phospholipase C (plc).